The sequence spans 858 residues: Elongation factor 2 (858 aa).

Residues A17–V362 form the tr-type G domain. Residue A26–S33 coordinates GTP. At T54 the chain carries Phosphothreonine. T57 carries the post-translational modification Phosphothreonine; by EEF2K. T59 is modified (phosphothreonine). K152 is modified (N6-succinyllysine). GTP-binding positions include N158–D161 and S216–L218. K235 is subject to N6-acetyllysine. K239 carries the post-translational modification N6-acetyllysine; alternate. Residue K239 forms a Glycyl lysine isopeptide (Lys-Gly) (interchain with G-Cter in SUMO1); alternate linkage. Phosphotyrosine; by CSK is present on Y265. K272 carries the N6-acetyllysine; alternate modification. An N6-succinyllysine; alternate modification is found at K272. K275 bears the N6-acetyllysine mark. Residue K322 forms a Glycyl lysine isopeptide (Lys-Gly) (interchain with G-Cter in SUMO) linkage. S325 bears the Phosphoserine mark. Phosphotyrosine; by CSK is present on Y373. Position 435 is a phosphothreonine (T435). Residues K439 and K445 each carry the N6-acetyllysine modification. At S502 the chain carries Phosphoserine. K525 carries the N6,N6,N6-trimethyllysine; by EEF2KMT modification. K529 is covalently cross-linked (Glycyl lysine isopeptide (Lys-Gly) (interchain with G-Cter in SUMO)). K572 carries the N6-succinyllysine modification. The residue at position 595 (S595) is a Phosphoserine; by CDK2. K619 bears the N6-acetyllysine mark. The residue at position 715 (H715) is a Diphthamide.

This sequence belongs to the TRAFAC class translation factor GTPase superfamily. Classic translation factor GTPase family. EF-G/EF-2 subfamily. Binds to 80S ribosomes. Actively translating ribosomes show mutually exclusive binding of eIF5a (EIF5A or EIF5A2) and EEF2/eEF2. Interacts with SERBP1; interaction sequesters EEF2/eEF2 at the A-site of the ribosome, thereby blocking the interaction sites of the mRNA-tRNA complex, promoting ribosome stabilization and hibernation. Interacts with HABP4; interaction takes place at the A-site of hibernating ribosomes and promotes ribosome stabilization. Component of the mRNA surveillance SURF complex, at least composed of ERF1, ERF3 (ERF3A or ERF3B), EEF2, UPF1/RENT1, SMG1, SMG8 and SMG9. Interacts with RBPMS2. Post-translationally, phosphorylation by EF-2 kinase completely inactivates EF-2; it requires prior phosphorylation by CDK2 at Ser-595 during mitotic prometaphase. Phosphorylation by CSK promotes SUMOylation, proteolytic cleavage, and nuclear translocation if the C-terminal fragment. Diphthamide is 2-[3-carboxyamido-3-(trimethyl-ammonio)propyl]histidine. In terms of processing, ISGylated. Post-translationally, proteolytically processed at two sites following phosphorylation by CSK. SUMOylated following phosphorylation by CSK, promotes proteolytic cleavage.

It localises to the cytoplasm. It is found in the nucleus. It carries out the reaction GTP + H2O = GDP + phosphate + H(+). Its function is as follows. Catalyzes the GTP-dependent ribosomal translocation step during translation elongation. During this step, the ribosome changes from the pre-translocational (PRE) to the post-translocational (POST) state as the newly formed A-site-bound peptidyl-tRNA and P-site-bound deacylated tRNA move to the P and E sites, respectively. Catalyzes the coordinated movement of the two tRNA molecules, the mRNA and conformational changes in the ribosome. This chain is Elongation factor 2 (Eef2), found in Mus musculus (Mouse).